The chain runs to 399 residues: Formate-dependent phosphoribosylglycinamide formyltransferase (399 aa).

Residues 22 to 23 (EL) and E82 each bind N(1)-(5-phospho-beta-D-ribosyl)glycinamide. ATP-binding positions include R114, K155, 160–165 (SSGKGQ), 195–198 (EKMI), and E203. Residues 119 to 308 (RLAAETLHLL…EFALHVRAFL (190 aa)) enclose the ATP-grasp domain. E267 and E279 together coordinate Mg(2+). Residues D286, K355, and 362–363 (RR) contribute to the N(1)-(5-phospho-beta-D-ribosyl)glycinamide site.

Belongs to the PurK/PurT family. Homodimer.

It catalyses the reaction N(1)-(5-phospho-beta-D-ribosyl)glycinamide + formate + ATP = N(2)-formyl-N(1)-(5-phospho-beta-D-ribosyl)glycinamide + ADP + phosphate + H(+). It functions in the pathway purine metabolism; IMP biosynthesis via de novo pathway; N(2)-formyl-N(1)-(5-phospho-D-ribosyl)glycinamide from N(1)-(5-phospho-D-ribosyl)glycinamide (formate route): step 1/1. Its function is as follows. Involved in the de novo purine biosynthesis. Catalyzes the transfer of formate to 5-phospho-ribosyl-glycinamide (GAR), producing 5-phospho-ribosyl-N-formylglycinamide (FGAR). Formate is provided by PurU via hydrolysis of 10-formyl-tetrahydrofolate. The protein is Formate-dependent phosphoribosylglycinamide formyltransferase of Proteus mirabilis (strain HI4320).